Reading from the N-terminus, the 473-residue chain is MSPRSGLLIVLGFTLWRVVMLNFDATDFFVDEAQYWFWSQNLDLGYYSKPPMIAWVIRAMTELSGSNAIYWIRLLGPLIHMAAALVLMKTAKRFVGPEIEGWTGATYITLPGVALSSVFFSTDVILLFFIAIALLAYFGLTQRRSVGLALVMGLGVGLAFLTKYAVLFVVPGGAIALLLIPAARIAVRDVIIAVAVAAVVALPNLWWNLQHDNTTVRHTQDIAHWSELGINLRRGLEFFAAQFGVVGPIIFFAMLWAVYRMIRGRSDDREKMLVWLSMPVVLLITLQATVAKAYANWAVTAYVAGTILAVWLLYLKWPKGLRLSLTINGIASLLFPLATIFPHQLLLPNGDALMKRYLGRAEVSREAAALATQAGTDIIVTDNRDMVADLFYTLRDASYRIYARAPAGLPESYYEQEFALPADITGKVLFLTDGAFTCATETPEVLKNWQPTEGNYKGKTLSIYKVSATCLAP.

The next 10 membrane-spanning stretches (helical) occupy residues 6-26 (GLLI…FDAT), 68-88 (AIYW…LVLM), 94-114 (FVGP…PGVA), 118-138 (VFFS…LAYF), 160-180 (FLTK…LLLI), 190-210 (VIIA…WNLQ), 238-258 (FFAA…LWAV), 271-291 (KMLV…ATVA), 295-315 (ANWA…LLYL), and 327-347 (INGI…QLLL).

It is found in the cell membrane. The protein operates within bacterial outer membrane biogenesis; LPS lipid A biosynthesis. Its function is as follows. Involved in the modification of the lipopolysaccharide (LPS) lipid A moiety. Catalyzes the transfer of a galacturonic acid (GalA) residue to the 4'-position of 4'-dephosphorylated lipid A, using dodecaprenyl phosphate-GalA as the donor substrate. Acts before the other GalA transferases RgtA, RgtB and RgtC. This chain is Lipid A galacturonosyltransferase RgtD, found in Rhizobium johnstonii (strain DSM 114642 / LMG 32736 / 3841) (Rhizobium leguminosarum bv. viciae).